The sequence spans 217 residues: Uracil-DNA glycosylase (217 aa).

The active-site Proton acceptor is aspartate 62.

Belongs to the uracil-DNA glycosylase (UDG) superfamily. UNG family.

The protein resides in the cytoplasm. It carries out the reaction Hydrolyzes single-stranded DNA or mismatched double-stranded DNA and polynucleotides, releasing free uracil.. Functionally, excises uracil residues from the DNA which can arise as a result of misincorporation of dUMP residues by DNA polymerase or due to deamination of cytosine. This is Uracil-DNA glycosylase from Streptococcus pyogenes serotype M49 (strain NZ131).